Consider the following 241-residue polypeptide: Small ribosomal subunit protein uS3 (241 aa).

The KH type-2 domain maps to Ile39 to Arg107. The segment at Ala214–Ala241 is disordered.

The protein belongs to the universal ribosomal protein uS3 family. In terms of assembly, part of the 30S ribosomal subunit. Forms a tight complex with proteins S10 and S14.

In terms of biological role, binds the lower part of the 30S subunit head. Binds mRNA in the 70S ribosome, positioning it for translation. The protein is Small ribosomal subunit protein uS3 of Mesorhizobium japonicum (strain LMG 29417 / CECT 9101 / MAFF 303099) (Mesorhizobium loti (strain MAFF 303099)).